A 205-amino-acid polypeptide reads, in one-letter code: uncharacterized protein (205 aa).

Residues 1–63 are Cytoplasmic-facing; the sequence is MQRTRELESS…QHPKVAKFLK (63 aa). The chain crosses the membrane as a helical span at residues 64–84; the sequence is VQLVFDLISLFIFATHQLLLL. The Extracellular portion of the chain corresponds to 85–124; the sequence is EDGNFGKHYFKRKTKRCSKFSCSRCNANAHHPKWFKFKHS. The helical transmembrane segment at 125 to 145 threads the bilayer; the sequence is LLCLGTFCFGVYSLVKINKFF. Residues 146–205 are Cytoplasmic-facing; it reads KTDQTVDLNRLLELFFWQLNAILNMKLFAFYGDHLESHSAPLDVYEDSFANKSSSGGDEV.

It localises to the membrane. This is an uncharacterized protein from Saccharomyces cerevisiae (strain ATCC 204508 / S288c) (Baker's yeast).